The sequence spans 356 residues: Dual-specificity RNA methyltransferase RlmN (356 aa).

Catalysis depends on Glu-89, which acts as the Proton acceptor. One can recognise a Radical SAM core domain in the interval 108–341; that stretch reads SHARYTICVS…CTIRESKGLD (234 aa). Cys-115 and Cys-346 form a disulfide bridge. Cys-122, Cys-126, and Cys-129 together coordinate [4Fe-4S] cluster. Residues 172 to 173, Ser-204, 227 to 229, and Asn-303 contribute to the S-adenosyl-L-methionine site; these read GE and SLH. Cys-346 functions as the S-methylcysteine intermediate in the catalytic mechanism.

It belongs to the radical SAM superfamily. RlmN family. The cofactor is [4Fe-4S] cluster.

Its subcellular location is the cytoplasm. It catalyses the reaction adenosine(2503) in 23S rRNA + 2 reduced [2Fe-2S]-[ferredoxin] + 2 S-adenosyl-L-methionine = 2-methyladenosine(2503) in 23S rRNA + 5'-deoxyadenosine + L-methionine + 2 oxidized [2Fe-2S]-[ferredoxin] + S-adenosyl-L-homocysteine. The catalysed reaction is adenosine(37) in tRNA + 2 reduced [2Fe-2S]-[ferredoxin] + 2 S-adenosyl-L-methionine = 2-methyladenosine(37) in tRNA + 5'-deoxyadenosine + L-methionine + 2 oxidized [2Fe-2S]-[ferredoxin] + S-adenosyl-L-homocysteine. Functionally, specifically methylates position 2 of adenine 2503 in 23S rRNA and position 2 of adenine 37 in tRNAs. m2A2503 modification seems to play a crucial role in the proofreading step occurring at the peptidyl transferase center and thus would serve to optimize ribosomal fidelity. In Campylobacter jejuni subsp. jejuni serotype O:23/36 (strain 81-176), this protein is Dual-specificity RNA methyltransferase RlmN.